A 234-amino-acid polypeptide reads, in one-letter code: Phosphoglycolate phosphatase (234 aa).

Residue Asp13 is the Nucleophile of the active site. The Mg(2+) site is built by Asp13, Asp15, and Asp175.

The protein belongs to the HAD-like hydrolase superfamily. CbbY/CbbZ/Gph/YieH family. Monomer. The cofactor is Mg(2+). Requires chloride as cofactor.

It catalyses the reaction 2-phosphoglycolate + H2O = glycolate + phosphate. It participates in organic acid metabolism; glycolate biosynthesis; glycolate from 2-phosphoglycolate: step 1/1. In terms of biological role, specifically catalyzes the dephosphorylation of 2-phosphoglycolate. Is involved in the dissimilation of the intracellular 2-phosphoglycolate formed during the DNA repair of 3'-phosphoglycolate ends, a major class of DNA lesions induced by oxidative stress. The polypeptide is Phosphoglycolate phosphatase (Pectobacterium atrosepticum (strain SCRI 1043 / ATCC BAA-672) (Erwinia carotovora subsp. atroseptica)).